The sequence spans 288 residues: Elongation factor Ts (288 aa).

The interval 82–85 (TDFV) is involved in Mg(2+) ion dislocation from EF-Tu.

Belongs to the EF-Ts family.

It is found in the cytoplasm. Associates with the EF-Tu.GDP complex and induces the exchange of GDP to GTP. It remains bound to the aminoacyl-tRNA.EF-Tu.GTP complex up to the GTP hydrolysis stage on the ribosome. The protein is Elongation factor Ts of Chlorobium luteolum (strain DSM 273 / BCRC 81028 / 2530) (Pelodictyon luteolum).